The chain runs to 152 residues: UPF0178 protein YaiI (152 aa).

Belongs to the UPF0178 family.

The sequence is that of UPF0178 protein YaiI from Shigella flexneri.